We begin with the raw amino-acid sequence, 452 residues long: Cytochrome b-c1 complex subunit 2, mitochondrial (452 aa).

The transit peptide at 1–14 (MKLLSRAGSFSRFY) directs the protein to the mitochondrion. An N6-acetyllysine mark is found at Lys65, Lys198, and Lys249. Position 367 is a phosphoserine (Ser367).

It belongs to the peptidase M16 family. UQCRC2/QCR2 subfamily. In terms of assembly, component of the ubiquinol-cytochrome c oxidoreductase (cytochrome b-c1 complex, complex III, CIII), a multisubunit enzyme composed of 11 subunits. The complex is composed of 3 respiratory subunits cytochrome b, cytochrome c1 and Rieske protein UQCRFS1, 2 core protein subunits UQCRC1/QCR1 and UQCRC2/QCR2, and 6 low-molecular weight protein subunits UQCRH/QCR6, UQCRB/QCR7, UQCRQ/QCR8, UQCR10/QCR9, UQCR11/QCR10 and subunit 9, the cleavage product of Rieske protein UQCRFS1. The complex exists as an obligatory dimer and forms supercomplexes (SCs) in the inner mitochondrial membrane with NADH-ubiquinone oxidoreductase (complex I, CI) and cytochrome c oxidase (complex IV, CIV), resulting in different assemblies (supercomplex SCI(1)III(2)IV(1) and megacomplex MCI(2)III(2)IV(2)). Interacts with RAB5IF. Interacts with STMP1. In terms of tissue distribution, expressed in the head region and flagellum of epididymal sperm.

The protein localises to the mitochondrion inner membrane. Functionally, component of the ubiquinol-cytochrome c oxidoreductase, a multisubunit transmembrane complex that is part of the mitochondrial electron transport chain which drives oxidative phosphorylation. The respiratory chain contains 3 multisubunit complexes succinate dehydrogenase (complex II, CII), ubiquinol-cytochrome c oxidoreductase (cytochrome b-c1 complex, complex III, CIII) and cytochrome c oxidase (complex IV, CIV), that cooperate to transfer electrons derived from NADH and succinate to molecular oxygen, creating an electrochemical gradient over the inner membrane that drives transmembrane transport and the ATP synthase. The cytochrome b-c1 complex catalyzes electron transfer from ubiquinol to cytochrome c, linking this redox reaction to translocation of protons across the mitochondrial inner membrane, with protons being carried across the membrane as hydrogens on the quinol. In the process called Q cycle, 2 protons are consumed from the matrix, 4 protons are released into the intermembrane space and 2 electrons are passed to cytochrome c. The 2 core subunits UQCRC1/QCR1 and UQCRC2/QCR2 are homologous to the 2 mitochondrial-processing peptidase (MPP) subunits beta-MPP and alpha-MPP respectively, and they seem to have preserved their MPP processing properties. May be involved in the in situ processing of UQCRFS1 into the mature Rieske protein and its mitochondrial targeting sequence (MTS)/subunit 9 when incorporated into complex III. The protein is Cytochrome b-c1 complex subunit 2, mitochondrial (Uqcrc2) of Rattus norvegicus (Rat).